A 174-amino-acid polypeptide reads, in one-letter code: Adipose-secreted signaling protein (174 aa).

Ala-2 is subject to N-acetylalanine. Phosphothreonine is present on Thr-147.

The protein belongs to the ADISSP family.

The protein resides in the secreted. Functionally, adipocyte-secreted protein (adipokine) that acts as a key regulator for white adipose tissue (WAT) thermogenesis and glucose homeostasis at least in part through activation of protein kinase A (PKA). The chain is Adipose-secreted signaling protein from Homo sapiens (Human).